We begin with the raw amino-acid sequence, 171 residues long: Peptidyl-prolyl cis-trans isomerase 7 (171 aa).

The PPIase cyclophilin-type domain occupies 7 to 170 (FFDITIAGKP…SECLIADCGQ (164 aa)).

This sequence belongs to the cyclophilin-type PPIase family.

It carries out the reaction [protein]-peptidylproline (omega=180) = [protein]-peptidylproline (omega=0). Functionally, PPIases accelerate the folding of proteins. It catalyzes the cis-trans isomerization of proline imidic peptide bonds in oligopeptides. This chain is Peptidyl-prolyl cis-trans isomerase 7 (cyn-7), found in Caenorhabditis elegans.